The sequence spans 613 residues: Cilia- and flagella-associated protein 100 (613 aa).

The interval 36–55 is disordered; the sequence is KSKESKKNKGNVTISDRSSN. Positions 45-55 are enriched in polar residues; that stretch reads GNVTISDRSSN. Coiled coils occupy residues 167–198, 233–260, 396–435, and 504–580; these read ALAM…FLEK, VEIR…KHYK, FTKL…DKEV, and GTVQ…RGRK.

Belongs to the CFAP100 family.

The protein resides in the cytoplasm. Its subcellular location is the cytoskeleton. It localises to the cilium axoneme. Functionally, may play a role in ciliary/flagellar motility by regulating the assembly and the activity of axonemal inner dynein arm. The protein is Cilia- and flagella-associated protein 100 of Mus musculus (Mouse).